The sequence spans 673 residues: Putative K(+)-stimulated pyrophosphate-energized sodium pump (673 aa).

The next 5 membrane-spanning stretches (helical) occupy residues 3-23, 62-82, 84-104, 127-147, and 154-174; these read SFIV…FMLS, IVIV…ACFI, GAIF…KANV, VMGM…YYIF, and VTGF…GGGI. Residue Lys177 participates in substrate binding. Residues Asp180, Asp184, Asn207, and Asp210 each coordinate Mg(2+). 6 helical membrane-spanning segments follow: residues 222-242, 247-267, 279-299, 302-322, 364-384, and 387-407; these read LFES…VVYA, VMFP…GILF, ALNT…AILS, IFGN…GMII, LWPI…MGGG, and AMVG…TTGL. Position 419 (Asp419) interacts with Mg(2+). 4 consecutive transmembrane segments (helical) span residues 449-469, 486-506, 553-573, and 576-596; these read AAIG…SLFA, VTLV…ALTM, EMIL…LLLG, and ALGG…ILMS. The Ca(2+) site is built by Asp603, Asp629, and Asp633. A substrate-binding site is contributed by Lys636. Residues 652–672 form a helical membrane-spanning segment; sequence IVSLVFAPVVLQYGGILLNLI.

The protein belongs to the H(+)-translocating pyrophosphatase (TC 3.A.10) family. K(+)-stimulated subfamily. Homodimer. Requires Mg(2+) as cofactor.

Its subcellular location is the cell membrane. The catalysed reaction is Na(+)(in) + diphosphate + H2O = Na(+)(out) + 2 phosphate + H(+). Its activity is regulated as follows. Requires K(+) for maximal activity. In terms of biological role, sodium pump that utilizes the energy of pyrophosphate hydrolysis as the driving force for Na(+) movement across the membrane. This Clostridium tetani (strain Massachusetts / E88) protein is Putative K(+)-stimulated pyrophosphate-energized sodium pump.